The following is a 1178-amino-acid chain: DNA-directed RNA polymerase subunit beta' (1178 aa).

C60, C62, C75, and C78 together coordinate Zn(2+). 3 residues coordinate Mg(2+): D450, D452, and D454. Zn(2+) contacts are provided by C795, C869, C876, and C879.

It belongs to the RNA polymerase beta' chain family. The RNAP catalytic core consists of 2 alpha, 1 beta, 1 beta' and 1 omega subunit. When a sigma factor is associated with the core the holoenzyme is formed, which can initiate transcription. The cofactor is Mg(2+). Requires Zn(2+) as cofactor.

It catalyses the reaction RNA(n) + a ribonucleoside 5'-triphosphate = RNA(n+1) + diphosphate. Functionally, DNA-dependent RNA polymerase catalyzes the transcription of DNA into RNA using the four ribonucleoside triphosphates as substrates. This Clostridium botulinum (strain Loch Maree / Type A3) protein is DNA-directed RNA polymerase subunit beta'.